The following is a 259-amino-acid chain: 2,3-dihydroxy-2,3-dihydro-p-cumate dehydrogenase (259 aa).

Position 18-42 (18-42) interacts with NAD(+); that stretch reads VTGGAHGIGLGIVERLLGLGARVTA. Tyrosine 163 functions as the Proton acceptor in the catalytic mechanism.

It belongs to the short-chain dehydrogenases/reductases (SDR) family.

The catalysed reaction is (2R,3S)-2,3-dihydroxy-2,3-dihydro-p-cumate + NAD(+) = 2,3-dihydroxy-p-cumate + NADH + H(+). It participates in aromatic compound metabolism; p-cumate degradation; acetaldehyde and pyruvate from p-cumate: step 2/7. The chain is 2,3-dihydroxy-2,3-dihydro-p-cumate dehydrogenase (cmtB) from Pseudomonas putida (strain ATCC 700007 / DSM 6899 / JCM 31910 / BCRC 17059 / LMG 24140 / F1).